Here is a 96-residue protein sequence, read N- to C-terminus: Small ribosomal subunit protein bS6 (96 aa).

This sequence belongs to the bacterial ribosomal protein bS6 family.

Functionally, binds together with bS18 to 16S ribosomal RNA. The polypeptide is Small ribosomal subunit protein bS6 (rpsF) (Streptomyces coelicolor (strain ATCC BAA-471 / A3(2) / M145)).